The sequence spans 178 residues: Hypoxanthine-guanine phosphoribosyltransferase (178 aa).

Diphosphate is bound by residues K46 and G47. Residue D103 participates in Mg(2+) binding. D106 acts as the Proton acceptor in catalysis. GMP-binding positions include K134, 155 to 156 (FL), and D162. R168 contacts diphosphate.

It belongs to the purine/pyrimidine phosphoribosyltransferase family. It depends on Mg(2+) as a cofactor.

It localises to the cytoplasm. It catalyses the reaction IMP + diphosphate = hypoxanthine + 5-phospho-alpha-D-ribose 1-diphosphate. The catalysed reaction is GMP + diphosphate = guanine + 5-phospho-alpha-D-ribose 1-diphosphate. It functions in the pathway purine metabolism; IMP biosynthesis via salvage pathway; IMP from hypoxanthine: step 1/1. The protein operates within purine metabolism; GMP biosynthesis via salvage pathway; GMP from guanine: step 1/1. In terms of biological role, purine salvage pathway enzyme that catalyzes the transfer of the ribosyl-5-phosphate group from 5-phospho-alpha-D-ribose 1-diphosphate (PRPP) to the N9 position of the 6-oxopurines hypoxanthine and guanine to form the corresponding ribonucleotides IMP (inosine 5'-monophosphate) and GMP (guanosine 5'-monophosphate), with the release of PPi. This is Hypoxanthine-guanine phosphoribosyltransferase (hpt) from Aquifex aeolicus (strain VF5).